The sequence spans 277 residues: Diaminopimelate epimerase (277 aa).

The substrate site is built by asparagine 15 and asparagine 74. The active-site Proton donor is cysteine 83. Residues 84-85 (GN), asparagine 159, asparagine 194, and 212-213 (ER) each bind substrate. Cysteine 221 acts as the Proton acceptor in catalysis. Residue 222-223 (GT) coordinates substrate.

Belongs to the diaminopimelate epimerase family. Homodimer.

Its subcellular location is the cytoplasm. It catalyses the reaction (2S,6S)-2,6-diaminopimelate = meso-2,6-diaminopimelate. It participates in amino-acid biosynthesis; L-lysine biosynthesis via DAP pathway; DL-2,6-diaminopimelate from LL-2,6-diaminopimelate: step 1/1. In terms of biological role, catalyzes the stereoinversion of LL-2,6-diaminopimelate (L,L-DAP) to meso-diaminopimelate (meso-DAP), a precursor of L-lysine and an essential component of the bacterial peptidoglycan. The sequence is that of Diaminopimelate epimerase from Corynebacterium glutamicum (strain R).